Consider the following 204-residue polypeptide: MPIEIPTDLTPELVPLSWLIGEWEGSGRLGAGEEDSEHFSQHVSFTHNGLPYLQYRAESWLTDDEGTRLRPLTVETGFWALERKQREEDGGPGLIPADIVPVLKSADEVEALRNSDGGFDISVSISHPGGISELYYGQIKGPQIQLSTDMVMRGSHSKEYTAATRIFGLVDGKLLWRWDVATGAGSTQGGGLEAHASAILSKIS.

The GXWXGXG motif lies at 21 to 27 (GEWEGSG). Histidine 195 contributes to the heme b binding site.

It belongs to the nitrobindin family. As to quaternary structure, homodimer. Heme b is required as a cofactor.

It carries out the reaction peroxynitrite = nitrate. It functions in the pathway nitrogen metabolism. In terms of biological role, heme-binding protein able to scavenge peroxynitrite and to protect free L-tyrosine against peroxynitrite-mediated nitration, by acting as a peroxynitrite isomerase that converts peroxynitrite to nitrate. Therefore, this protein likely plays a role in peroxynitrite sensing and in the detoxification of reactive nitrogen and oxygen species (RNS and ROS, respectively). Is able to bind nitric oxide (NO) in vitro, but may act as a sensor of peroxynitrite levels in vivo. This Arthrobacter sp. (strain FB24) protein is Peroxynitrite isomerase.